We begin with the raw amino-acid sequence, 430 residues long: Centrosomal protein CEP57L1 (430 aa).

Residue Ser45 is modified to Phosphoserine. A coiled-coil region spans residues Pro46–Ala213. Disordered regions lie at residues Cys248–Phe290 and Arg362–Gln430. Basic and acidic residues-rich tracts occupy residues Leu249–Pro272, Arg362–Arg372, and Leu421–Gln430. Residues Phe290–Ser377 are a coiled coil.

This sequence belongs to the translokin family.

It localises to the cytoplasm. Its subcellular location is the cytoskeleton. The protein localises to the microtubule organizing center. The protein resides in the centrosome. Functionally, centrosomal protein which may be required for microtubule attachment to centrosomes. The protein is Centrosomal protein CEP57L1 (Cep57l1) of Rattus norvegicus (Rat).